The sequence spans 341 residues: MEVSRKKIYNPNSTESVNERKIFGGNPTSMFDLNKIKYQWADHLWKTMLANTWFAEEVSMNDDKRDYLKLSAEEKIGYDRALAQLIFMDSLQANNLIDNINPFITSPEINLCLVRQAYEEALHSHAYAVMVESISANTEEIYDMWRNDMQLKSKNDYIAQVYMELAKNPTEENILKALFANQILEGIYFYSGFSYFYTLARSGKMLGSAQMIRFIQRDEVTHLILFQNMINALRNERADLFTPQLINEVIEMFKKAVEIEASWGDYITQGKILGLTSSLIEQYIQFLADSRLSKVGIAKVYGVQHPIKWVESFSSFNEQRSNFFEARVSNYAKGSVSFDDF.

The Fe cation site is built by D89, E120, and H123. Y127 is a catalytic residue. Residues E185, E219, and H222 each coordinate Fe cation.

Belongs to the ribonucleoside diphosphate reductase small chain family. In terms of assembly, tetramer of two alpha and two beta subunits. It depends on Fe cation as a cofactor.

It carries out the reaction a 2'-deoxyribonucleoside 5'-diphosphate + [thioredoxin]-disulfide + H2O = a ribonucleoside 5'-diphosphate + [thioredoxin]-dithiol. Functionally, provides the precursors necessary for DNA synthesis. Catalyzes the biosynthesis of deoxyribonucleotides from the corresponding ribonucleotides. The polypeptide is Ribonucleoside-diphosphate reductase subunit beta (nrdB) (Helicobacter pylori (strain J99 / ATCC 700824) (Campylobacter pylori J99)).